Consider the following 335-residue polypeptide: Ferredoxin--NADP reductase (335 aa).

The FAD site is built by aspartate 35, glutamine 43, tyrosine 48, alanine 88, phenylalanine 122, aspartate 287, and serine 328.

This sequence belongs to the ferredoxin--NADP reductase type 2 family. In terms of assembly, homodimer. The cofactor is FAD.

It carries out the reaction 2 reduced [2Fe-2S]-[ferredoxin] + NADP(+) + H(+) = 2 oxidized [2Fe-2S]-[ferredoxin] + NADPH. This chain is Ferredoxin--NADP reductase, found in Thermus thermophilus (strain ATCC BAA-163 / DSM 7039 / HB27).